The following is a 608-amino-acid chain: Chaperone protein HtpG (608 aa).

The tract at residues 1-332 is a; substrate-binding; the sequence is MQFQTEVNQL…VEDLPLNVSR (332 aa). The tract at residues 333-536 is b; it reads EILQENQILK…KNKLDFAMQQ (204 aa). The c stretch occupies residues 537-608; it reads LLKQMGQEQN…LTKIINKAFS (72 aa).

Belongs to the heat shock protein 90 family. Homodimer.

It localises to the cytoplasm. Functionally, molecular chaperone. Has ATPase activity. The sequence is that of Chaperone protein HtpG from Campylobacter jejuni subsp. doylei (strain ATCC BAA-1458 / RM4099 / 269.97).